The sequence spans 186 residues: VRPLNCIVAVSQNMGIGKNGDLPWPPLRNEYKYFQRMTTTSSVEGKQNLVIMGRKTWFSIPEKNRPLKDRINIVLSRELKEPPQGAHFLAKSLDDALKLTEQPELKDKVDMVWIVGGSSVYKEAMNKPGHIRLFVTRIMKEFESDTFFPEIDLEKYKLLSECSGVPSDVQEEKGIKYKFEVYEKNN.

One can recognise a DHFR domain in the interval 3-184 (PLNCIVAVSQ…IKYKFEVYEK (182 aa)). NADP(+) is bound by residues A9 and 15-21 (GIGKNGD). 30 to 35 (EYKYFQ) lines the substrate pocket. Position 32 is an N6-acetyllysine; alternate (K32). K32 is subject to N6-succinyllysine; alternate. 54 to 56 (RKT) is a binding site for NADP(+). Residue R70 participates in substrate binding. NADP(+)-binding positions include 76-78 (SRE) and 116-123 (GGSSVYKE). A Cysteine derivative; partial modification is found at C162.

It belongs to the dihydrofolate reductase family. Homodimer.

The protein resides in the mitochondrion. It is found in the cytoplasm. It carries out the reaction (6S)-5,6,7,8-tetrahydrofolate + NADP(+) = 7,8-dihydrofolate + NADPH + H(+). It participates in cofactor biosynthesis; tetrahydrofolate biosynthesis; 5,6,7,8-tetrahydrofolate from 7,8-dihydrofolate: step 1/1. Key enzyme in folate metabolism. Contributes to the de novo mitochondrial thymidylate biosynthesis pathway. Catalyzes an essential reaction for de novo glycine and purine synthesis, and for DNA precursor synthesis. Binds its own mRNA and that of DHFR2. The protein is Dihydrofolate reductase (DHFR) of Sus scrofa (Pig).